The primary structure comprises 237 residues: Orotidine 5'-phosphate decarboxylase (237 aa).

Residues D11, K34, 61 to 70 (DLKLHDIPNT), T123, R185, Q194, G214, and R215 contribute to the substrate site. The active-site Proton donor is K63.

This sequence belongs to the OMP decarboxylase family. Type 1 subfamily. In terms of assembly, homodimer.

The enzyme catalyses orotidine 5'-phosphate + H(+) = UMP + CO2. It functions in the pathway pyrimidine metabolism; UMP biosynthesis via de novo pathway; UMP from orotate: step 2/2. In terms of biological role, catalyzes the decarboxylation of orotidine 5'-monophosphate (OMP) to uridine 5'-monophosphate (UMP). This is Orotidine 5'-phosphate decarboxylase from Ligilactobacillus salivarius (strain UCC118) (Lactobacillus salivarius).